Here is a 2596-residue protein sequence, read N- to C-terminus: Cadherin EGF LAG seven-pass G-type receptor fmi-1 (2596 aa).

A signal peptide spans 1 to 22 (MMLDRIMFLLFFILSLVIGSFS). At 23–2229 (EYLDDKYYST…IVRVAQMDNM (2207 aa)) the chain is on the extracellular side. 8 Cadherin domains span residues 166–270 (QQEK…SPIF), 271–375 (EKDS…APVF), 376–479 (ASDS…APTL), 480–581 (IAAQ…APTF), 582–682 (DKKE…APYF), 683–784 (NDHP…SPQF), 785–892 (TSSS…APTF), and 893–1000 (EQLS…KPAL). Residues asparagine 381, asparagine 387, asparagine 562, asparagine 587, asparagine 765, and asparagine 824 are each glycosylated (N-linked (GlcNAc...) asparagine). Asparagine 1030 and asparagine 1263 each carry an N-linked (GlcNAc...) asparagine glycan. The EGF-like 1 domain maps to 1251-1287 (RIDECYRGRCSNNSTCVAFENTYQCECKPGWIGRHCE). 12 disulfide bridges follow: cysteine 1255-cysteine 1266, cysteine 1260-cysteine 1275, cysteine 1277-cysteine 1286, cysteine 1497-cysteine 1526, cysteine 1533-cysteine 1546, cysteine 1540-cysteine 1555, cysteine 1557-cysteine 1567, cysteine 1709-cysteine 1732, cysteine 1738-cysteine 1750, cysteine 1744-cysteine 1759, cysteine 1761-cysteine 1770, and cysteine 1780-cysteine 1785. One can recognise a Laminin G-like 1 domain in the interval 1333–1526 (SVSFDGEGLL…HKVGQVHEGC (194 aa)). Residues 1529-1568 (RKDFCSTSDGQCSATSKCVNRWGGRICSCPQSVHSTGECV) form the EGF-like 2 domain. The 156-residue stretch at 1577 to 1732 (RGHSLFEEES…KKKGKTRAGC (156 aa)) folds into the Laminin G-like 2 domain. 2 EGF-like domains span residues 1734–1771 (VPNR…DTCL) and 1776–1808 (VANV…KNCQ). The N-linked (GlcNAc...) asparagine glycan is linked to asparagine 1789. Cysteine 1798 and cysteine 1807 are disulfide-bonded. Residues asparagine 1965, asparagine 1992, asparagine 2152, asparagine 2195, and asparagine 2228 are each glycosylated (N-linked (GlcNAc...) asparagine). The region spanning 2054-2219 (EYSTLISKLW…TMFVNDQSSS (166 aa)) is the GAIN-B domain. Cysteine 2174 and cysteine 2201 are joined by a disulfide. The tract at residues 2174 to 2219 (CVRFDEKSGTWTARGAALIGLNLTHAACEYNRIGVFTMFVNDQSSS) is GPS. The chain crosses the membrane as a helical span at residues 2230-2250 (TSPAIAGVALFLCFLSILLTL). At 2251–2261 (SRRSLKTHSVR) the chain is on the cytoplasmic side. A helical membrane pass occupies residues 2262–2282 (IGFILFFAINILNLFFVHKTA). Topologically, residues 2283–2292 (INQAYCPVRN) are extracellular. A helical transmembrane segment spans residues 2293 to 2313 (AMLSFTSSAPFAWLFLYGLYI). Residues 2314–2326 (YRMLADGSSSPSL) lie on the Cytoplasmic side of the membrane. Residues 2327–2347 (TTSLLVGIVFPCLISFTTFFV) form a helical membrane-spanning segment. Residues 2348–2356 (TDQCSLSPH) lie on the Extracellular side of the membrane. A helical transmembrane segment spans residues 2357 to 2377 (LWLFWCIILPIGLFLLLSFYA). The Cytoplasmic segment spans residues 2378 to 2401 (AATSVLVSLHKKYDVFVAKYNVKR). The helical transmembrane segment at 2402-2422 (AVFQHFILTIFTLGMTLTGLF) threads the bilayer. Over 2423 to 2437 (ANQLPLPMEIMEISQ) the chain is Extracellular. The helical transmembrane segment at 2438–2458 (SIIYLIAALVIFLWCVCDITT) threads the bilayer. Topologically, residues 2459-2596 (KASDSNPSMW…KNTTSTFNRE (138 aa)) are cytoplasmic.

It belongs to the G-protein coupled receptor 2 family. LN-TM7 subfamily. Expressed in a region of neuropil around the nerve ring and the ventral cord (at protein level). Expressed in the head, tail, ventral cord, nerve ring and neurons including HSN neurons. Expressed in DA, VA, and VB and weakly in the DB cholinergic neurons. Not expressed in ventral D-type GABAergic motorneurons.

It localises to the cell membrane. It is found in the cell projection. Its subcellular location is the axon. The protein resides in the dendrite. In terms of biological role, during ventral cord development, required for axon fasciculation and navigation, mediating both pioneer and follower axon extension, guidance and track formation. Acts in CEPsh glia and SubL neurons to guide follower axons into the nerve ring. Promotes motorneuron development by positively regulating the extension of the anterior neurite of ventral D-type GABAergic motorneurons along the anterior-posterior axis of the ventral nerve cord. Plays a role in synaptogenesis by regulating synaptic vesicle accumulation at GABAergic and cholinergic neuromuscular junctions. This is Cadherin EGF LAG seven-pass G-type receptor fmi-1 from Caenorhabditis elegans.